Here is a 357-residue protein sequence, read N- to C-terminus: 3-isopropylmalate dehydrogenase (357 aa).

Residue 76–89 (GPQWDTIDPSLRPE) coordinates NAD(+). 4 residues coordinate substrate: Arg96, Arg106, Arg134, and Asp224. Asp224, Asp248, and Asp252 together coordinate Mg(2+). 282 to 294 (GSAPDIAGKGIAN) contacts NAD(+).

Belongs to the isocitrate and isopropylmalate dehydrogenases family. LeuB type 1 subfamily. In terms of assembly, homodimer. It depends on Mg(2+) as a cofactor. Mn(2+) serves as cofactor.

The protein resides in the cytoplasm. The catalysed reaction is (2R,3S)-3-isopropylmalate + NAD(+) = 4-methyl-2-oxopentanoate + CO2 + NADH. Its pathway is amino-acid biosynthesis; L-leucine biosynthesis; L-leucine from 3-methyl-2-oxobutanoate: step 3/4. Catalyzes the oxidation of 3-carboxy-2-hydroxy-4-methylpentanoate (3-isopropylmalate) to 3-carboxy-4-methyl-2-oxopentanoate. The product decarboxylates to 4-methyl-2 oxopentanoate. This is 3-isopropylmalate dehydrogenase from Xanthomonas oryzae pv. oryzae (strain MAFF 311018).